The sequence spans 287 residues: Large ribosomal subunit protein uL2 (287 aa).

Residues 221 to 287 are disordered; the sequence is RGSVMNPCDH…SKRSRGGRDS (67 aa). Positions 258-287 are enriched in basic residues; the sequence is KTRKKNKPSNKLVVRRRRRISKRSRGGRDS.

The protein belongs to the universal ribosomal protein uL2 family. In terms of assembly, part of the 50S ribosomal subunit. Forms a bridge to the 30S subunit in the 70S ribosome.

Its function is as follows. One of the primary rRNA binding proteins. Required for association of the 30S and 50S subunits to form the 70S ribosome, for tRNA binding and peptide bond formation. It has been suggested to have peptidyltransferase activity; this is somewhat controversial. Makes several contacts with the 16S rRNA in the 70S ribosome. The chain is Large ribosomal subunit protein uL2 from Prochlorococcus marinus (strain MIT 9301).